Consider the following 187-residue polypeptide: Lipoprotein signal peptidase (187 aa).

Transmembrane regions (helical) follow at residues 12–32 (VAVF…TKMW), 68–88 (MTWL…VLAV), and 91–111 (ISMK…GNLI). Catalysis depends on residues Asp127 and Asp140. The helical transmembrane segment at 141-161 (IFLMLAGVAAVLLLFLGEPFS) threads the bilayer. The tract at residues 167–187 (EANGKTLGDDANATDDGAKAA) is disordered.

The protein belongs to the peptidase A8 family.

Its subcellular location is the cell membrane. The enzyme catalyses Release of signal peptides from bacterial membrane prolipoproteins. Hydrolyzes -Xaa-Yaa-Zaa-|-(S,diacylglyceryl)Cys-, in which Xaa is hydrophobic (preferably Leu), and Yaa (Ala or Ser) and Zaa (Gly or Ala) have small, neutral side chains.. It functions in the pathway protein modification; lipoprotein biosynthesis (signal peptide cleavage). Functionally, this protein specifically catalyzes the removal of signal peptides from prolipoproteins. The protein is Lipoprotein signal peptidase of Bifidobacterium adolescentis (strain ATCC 15703 / DSM 20083 / NCTC 11814 / E194a).